Here is a 95-residue protein sequence, read N- to C-terminus: Scorpine-like peptide Smp76 (95 aa).

Positions 1 to 19 (MNCKLTALLFLGLIVIASC) are cleaved as a signal peptide. Positions 55 to 95 (EFQCVANVDTLGNCKKHCAKTTGEKGYCHGTKCKCGIELSY) constitute a BetaSPN-type CS-alpha/beta domain. Intrachain disulfides connect C58–C82, C68–C87, and C72–C89.

Post-translationally, disulfide bonds are critical for antiviral function, and their disruption inhibit viral activity. In terms of tissue distribution, expressed by the venom gland.

It is found in the secreted. Antibacterial peptide. Dose-dependently inhibits Dengue virus (DENV), Zika virus (ZIKV) and Hepatitis C virus (HCV) infections. Two mechanisms of action have been described by two different groups: one involving activity on extracellular particles, and the other regulating the immune system. On Dengue virus (DENV), Zika virus (ZIKV), suppress the established viral infection, similar to the effect of interferon (IFN)-beta. Mechanistically, upregulates the expression of IFN-beta by activating interferon regulatory transcription factor 3 (IRF3) phosphorylation. On HCV and DENV, acts by inactivating extra-cellular infectious particles without affecting viral replication. Shows very weak inhibition on measles virus. Is neither toxic nor hemolytic in vitro at high concentrations. The chain is Scorpine-like peptide Smp76 from Scorpio palmatus (Israeli golden scorpion).